Reading from the N-terminus, the 430-residue chain is Cell wall protein ECM33 (430 aa).

An N-terminal signal peptide occupies residues methionine 1 to alanine 19. Asparagine 22, asparagine 57, asparagine 83, asparagine 197, asparagine 210, asparagine 228, asparagine 235, asparagine 242, asparagine 268, asparagine 280, asparagine 305, and asparagine 329 each carry an N-linked (GlcNAc...) asparagine glycan. Residue serine 340 is modified to Phosphoserine. The span at leucine 362 to serine 402 shows a compositional bias: low complexity. Residues leucine 362 to glutamate 411 form a disordered region. Glycine 407 carries the GPI-anchor amidated glycine lipid modification. Positions alanine 408–leucine 430 are cleaved as a propeptide — removed in mature form.

The protein belongs to the SPS2 family. The GPI-anchor is attached to the protein in the endoplasmic reticulum and serves to target the protein to the cell surface. There, the glucosamine-inositol phospholipid moiety is cleaved off and the GPI-modified mannoprotein is covalently attached via its lipidless GPI glycan remnant to the 1,6-beta-glucan of the outer cell wall layer.

The protein localises to the cell membrane. It localises to the secreted. Its subcellular location is the cell wall. Its function is as follows. Required for proper cell wall integrity and for the correct assembly of the mannoprotein outer layer of the cell wall. Important for apical bud growth. The protein is Cell wall protein ECM33 (ECM33) of Saccharomyces cerevisiae (strain JAY291) (Baker's yeast).